Reading from the N-terminus, the 618-residue chain is tRNA 5-methylaminomethyl-2-thiouridine biosynthesis bifunctional protein MnmC (618 aa).

The segment at 1–231 (MLQTYAPIDF…KRHMLSAVYE (231 aa)) is tRNA (mnm(5)s(2)U34)-methyltransferase. The FAD-dependent cmnm(5)s(2)U34 oxidoreductase stretch occupies residues 256–618 (IGAGIAGATT…KDIIRGHLNN (363 aa)).

The protein in the N-terminal section; belongs to the methyltransferase superfamily. tRNA (mnm(5)s(2)U34)-methyltransferase family. This sequence in the C-terminal section; belongs to the DAO family. The cofactor is FAD.

It is found in the cytoplasm. The catalysed reaction is 5-aminomethyl-2-thiouridine(34) in tRNA + S-adenosyl-L-methionine = 5-methylaminomethyl-2-thiouridine(34) in tRNA + S-adenosyl-L-homocysteine + H(+). Functionally, catalyzes the last two steps in the biosynthesis of 5-methylaminomethyl-2-thiouridine (mnm(5)s(2)U) at the wobble position (U34) in tRNA. Catalyzes the FAD-dependent demodification of cmnm(5)s(2)U34 to nm(5)s(2)U34, followed by the transfer of a methyl group from S-adenosyl-L-methionine to nm(5)s(2)U34, to form mnm(5)s(2)U34. In Dichelobacter nodosus (strain VCS1703A), this protein is tRNA 5-methylaminomethyl-2-thiouridine biosynthesis bifunctional protein MnmC.